The primary structure comprises 143 residues: Large ribosomal subunit protein uL11 (143 aa).

The protein belongs to the universal ribosomal protein uL11 family. As to quaternary structure, part of the ribosomal stalk of the 50S ribosomal subunit. Interacts with L10 and the large rRNA to form the base of the stalk. L10 forms an elongated spine to which L12 dimers bind in a sequential fashion forming a multimeric L10(L12)X complex. Post-translationally, one or more lysine residues are methylated.

Functionally, forms part of the ribosomal stalk which helps the ribosome interact with GTP-bound translation factors. This is Large ribosomal subunit protein uL11 from Psychrobacter cryohalolentis (strain ATCC BAA-1226 / DSM 17306 / VKM B-2378 / K5).